The following is a 133-amino-acid chain: Ribosome-binding factor A (133 aa).

Belongs to the RbfA family. As to quaternary structure, monomer. Binds 30S ribosomal subunits, but not 50S ribosomal subunits or 70S ribosomes.

Its subcellular location is the cytoplasm. Functionally, one of several proteins that assist in the late maturation steps of the functional core of the 30S ribosomal subunit. Associates with free 30S ribosomal subunits (but not with 30S subunits that are part of 70S ribosomes or polysomes). Required for efficient processing of 16S rRNA. May interact with the 5'-terminal helix region of 16S rRNA. The sequence is that of Ribosome-binding factor A from Bordetella parapertussis (strain 12822 / ATCC BAA-587 / NCTC 13253).